We begin with the raw amino-acid sequence, 69 residues long: uncharacterized protein (69 aa).

Residues 10 to 64 (IRAFRKLKGYTQEGFAKALGISVSILGEIERGNRLPSAAIIQDAADVLNISADEL) enclose the HTH cro/C1-type domain. A DNA-binding region (H-T-H motif) is located at residues 21–40 (QEGFAKALGISVSILGEIER).

This is an uncharacterized protein from Bacillus subtilis (strain 168).